The chain runs to 512 residues: 2-isopropylmalate synthase (512 aa).

Positions 5–267 constitute a Pyruvate carboxyltransferase domain; that stretch reads LYIFDTTLRD…DSRVDATQIV (263 aa). Aspartate 14, histidine 202, histidine 204, and asparagine 238 together coordinate Mn(2+). A regulatory domain region spans residues 393–512; the sequence is KLVSLKVVSE…EEKMNAQAAA (120 aa).

Belongs to the alpha-IPM synthase/homocitrate synthase family. LeuA type 1 subfamily. Homodimer. Requires Mn(2+) as cofactor.

It is found in the cytoplasm. The catalysed reaction is 3-methyl-2-oxobutanoate + acetyl-CoA + H2O = (2S)-2-isopropylmalate + CoA + H(+). It functions in the pathway amino-acid biosynthesis; L-leucine biosynthesis; L-leucine from 3-methyl-2-oxobutanoate: step 1/4. Functionally, catalyzes the condensation of the acetyl group of acetyl-CoA with 3-methyl-2-oxobutanoate (2-ketoisovalerate) to form 3-carboxy-3-hydroxy-4-methylpentanoate (2-isopropylmalate). The sequence is that of 2-isopropylmalate synthase from Chromobacterium violaceum (strain ATCC 12472 / DSM 30191 / JCM 1249 / CCUG 213 / NBRC 12614 / NCIMB 9131 / NCTC 9757 / MK).